Reading from the N-terminus, the 241-residue chain is uncharacterized protein (241 aa).

Belongs to the AB hydrolase superfamily. AB hydrolase 2 family.

This is an uncharacterized protein from Schizosaccharomyces pombe (strain 972 / ATCC 24843) (Fission yeast).